We begin with the raw amino-acid sequence, 183 residues long: Archaemetzincin (183 aa).

Histidine 131 contributes to the Zn(2+) binding site. Glutamate 132 acts as the Proton acceptor in catalysis. Zn(2+)-binding residues include histidine 135, histidine 141, cysteine 142, cysteine 147, and cysteine 166.

The protein belongs to the peptidase M54 family. In terms of assembly, monomer. It depends on Zn(2+) as a cofactor.

Its function is as follows. Probable zinc metalloprotease whose natural substrate is unknown. The polypeptide is Archaemetzincin (Saccharolobus solfataricus (strain ATCC 35092 / DSM 1617 / JCM 11322 / P2) (Sulfolobus solfataricus)).